The primary structure comprises 137 residues: Putative pre-16S rRNA nuclease (137 aa).

Belongs to the YqgF nuclease family.

It is found in the cytoplasm. In terms of biological role, could be a nuclease involved in processing of the 5'-end of pre-16S rRNA. In Mycoplasmopsis synoviae (strain 53) (Mycoplasma synoviae), this protein is Putative pre-16S rRNA nuclease.